The chain runs to 95 residues: MHPTQIILRPVITEKVTILRDSVKKVAFFVHPQSNKIEVKKAIELLFNVKVMAINVVNYTPRVRTRNRRKVHVSGCRKAYVTLAPGEKISFFEGL.

The protein belongs to the universal ribosomal protein uL23 family. Part of the 50S ribosomal subunit. Contacts protein L29, and trigger factor when it is bound to the ribosome.

Its function is as follows. One of the early assembly proteins it binds 23S rRNA. One of the proteins that surrounds the polypeptide exit tunnel on the outside of the ribosome. Forms the main docking site for trigger factor binding to the ribosome. This Lawsonia intracellularis (strain PHE/MN1-00) protein is Large ribosomal subunit protein uL23.